The sequence spans 132 residues: Small ribosomal subunit protein uS11 (132 aa).

The protein belongs to the universal ribosomal protein uS11 family. Part of the 30S ribosomal subunit. Interacts with proteins S7 and S18. Binds to IF-3.

Located on the platform of the 30S subunit, it bridges several disparate RNA helices of the 16S rRNA. Forms part of the Shine-Dalgarno cleft in the 70S ribosome. This is Small ribosomal subunit protein uS11 from Chlamydia trachomatis serovar D (strain ATCC VR-885 / DSM 19411 / UW-3/Cx).